Consider the following 305-residue polypeptide: Tyrosine recombinase XerC (305 aa).

The Core-binding (CB) domain occupies 4–95 (TSIQALINKW…AVKNFYRFLE (92 aa)). Positions 116–298 (LLPKALSEDD…SIKHLEAVYT (183 aa)) constitute a Tyr recombinase domain. Catalysis depends on residues R159, K182, H250, R253, and H276. Y285 serves as the catalytic O-(3'-phospho-DNA)-tyrosine intermediate.

The protein belongs to the 'phage' integrase family. XerC subfamily. As to quaternary structure, forms a cyclic heterotetrameric complex composed of two molecules of XerC and two molecules of XerD.

It is found in the cytoplasm. Site-specific tyrosine recombinase, which acts by catalyzing the cutting and rejoining of the recombining DNA molecules. The XerC-XerD complex is essential to convert dimers of the bacterial chromosome into monomers to permit their segregation at cell division. It also contributes to the segregational stability of plasmids. This is Tyrosine recombinase XerC from Rickettsia conorii (strain ATCC VR-613 / Malish 7).